Consider the following 504-residue polypeptide: Maturase K (504 aa).

Belongs to the intron maturase 2 family. MatK subfamily.

The protein resides in the plastid. It localises to the chloroplast. Usually encoded in the trnK tRNA gene intron. Probably assists in splicing its own and other chloroplast group II introns. This is Maturase K from Vauquelinia californica (Arizona rosewood).